We begin with the raw amino-acid sequence, 161 residues long: ATP synthase subunit b' (161 aa).

The chain crosses the membrane as a helical span at residues 26–45 (LPLMAIQFLLLAFVLDKIFY).

Belongs to the ATPase B chain family. As to quaternary structure, F-type ATPases have 2 components, F(1) - the catalytic core - and F(0) - the membrane proton channel. F(1) has five subunits: alpha(3), beta(3), gamma(1), delta(1), epsilon(1). F(0) has four main subunits: a(1), b(1), b'(1) and c(10-14). The alpha and beta chains form an alternating ring which encloses part of the gamma chain. F(1) is attached to F(0) by a central stalk formed by the gamma and epsilon chains, while a peripheral stalk is formed by the delta, b and b' chains.

It is found in the cellular thylakoid membrane. Functionally, f(1)F(0) ATP synthase produces ATP from ADP in the presence of a proton or sodium gradient. F-type ATPases consist of two structural domains, F(1) containing the extramembraneous catalytic core and F(0) containing the membrane proton channel, linked together by a central stalk and a peripheral stalk. During catalysis, ATP synthesis in the catalytic domain of F(1) is coupled via a rotary mechanism of the central stalk subunits to proton translocation. Its function is as follows. Component of the F(0) channel, it forms part of the peripheral stalk, linking F(1) to F(0). The b'-subunit is a diverged and duplicated form of b found in plants and photosynthetic bacteria. The chain is ATP synthase subunit b' from Trichodesmium erythraeum (strain IMS101).